Reading from the N-terminus, the 377-residue chain is Anhydro-N-acetylmuramic acid kinase (377 aa).

12–19 (GTSLDGID) lines the ATP pocket.

This sequence belongs to the anhydro-N-acetylmuramic acid kinase family.

The catalysed reaction is 1,6-anhydro-N-acetyl-beta-muramate + ATP + H2O = N-acetyl-D-muramate 6-phosphate + ADP + H(+). Its pathway is amino-sugar metabolism; 1,6-anhydro-N-acetylmuramate degradation. It participates in cell wall biogenesis; peptidoglycan recycling. In terms of biological role, catalyzes the specific phosphorylation of 1,6-anhydro-N-acetylmuramic acid (anhMurNAc) with the simultaneous cleavage of the 1,6-anhydro ring, generating MurNAc-6-P. Is required for the utilization of anhMurNAc either imported from the medium or derived from its own cell wall murein, and thus plays a role in cell wall recycling. This chain is Anhydro-N-acetylmuramic acid kinase, found in Methylorubrum populi (strain ATCC BAA-705 / NCIMB 13946 / BJ001) (Methylobacterium populi).